A 359-amino-acid chain; its full sequence is Olfactory receptor 8S1 (359 aa).

Over 1–25 (MALGNHSTITEFLLLGLSADPNIRA) the chain is Extracellular. N5 carries an N-linked (GlcNAc...) asparagine glycan. A helical membrane pass occupies residues 26–46 (LLFVLFLGIYLLTIMENLMLL). Over 47 to 54 (LMIRADSC) the chain is Cytoplasmic. The chain crosses the membrane as a helical span at residues 55–75 (LHKPMYFFLSHLSFVDLCFSS). Residues 76–99 (VIVPKMLENLLSQRKTISVEGCLA) are Extracellular-facing. An intrachain disulfide couples C97 to C189. A helical membrane pass occupies residues 100–120 (QVFFVFVTAGTEACLLSGMAY). The Cytoplasmic portion of the chain corresponds to 121–139 (DRHAAICRPLLYGQIMGKQ). The chain crosses the membrane as a helical span at residues 140–160 (LYMHLVWGSWGLGFLDALINV). Topologically, residues 161 to 197 (LLAVNMVFCEAKIIHHYSYEMPSLLPLSCSDISRSLI) are extracellular. The chain crosses the membrane as a helical span at residues 198-217 (ALLCSTLLHGLGNFLLVFLS). Topologically, residues 218–237 (YTRIISTILSISSTSGRSKA) are cytoplasmic. A helical transmembrane segment spans residues 238 to 258 (FSTCSAHLTAVTLYYGSGLLR). At 259–269 (HLMPNSGSPIE) the chain is on the extracellular side. The helical transmembrane segment at 270–290 (LIFSVQYTVVTPMLNSLIYSL) threads the bilayer. The Cytoplasmic portion of the chain corresponds to 291–359 (KNKEVKGERS…ALRAAPTALP (69 aa)). The segment at 301-338 (LRDSSHLPQLHKGQARWKRPAFTEGRREPGHPELSIPV) is disordered.

It belongs to the G-protein coupled receptor 1 family.

It localises to the cell membrane. In terms of biological role, odorant receptor. The protein is Olfactory receptor 8S1 (OR8S1) of Homo sapiens (Human).